We begin with the raw amino-acid sequence, 1253 residues long: Guanine nucleotide exchange factor SDC25 (1253 aa).

In terms of domain architecture, SH3 spans 26–98; sequence QPIDVVECTY…PPSFTRSILN (73 aa). Residues 624 to 649 form a disordered region; it reads LNLDNAKDKKNGSQNTDIQEEEDEYE. Positions 782 to 914 constitute an N-terminal Ras-GEF domain; that stretch reads GPIVRIKGGS…ELLKEVNQKF (133 aa). Positions 952-1199 constitute a Ras-GEF domain; the sequence is VDPVLFATQL…QYQLSLIIEP (248 aa). Positions 1202 to 1253 are disordered; it reads RKKVVPNSNSNNKSQEKSRDDQTDEGKTSTKKDRFPKFQLHKTKKKAPKVSK. Positions 1215–1237 are enriched in basic and acidic residues; it reads SQEKSRDDQTDEGKTSTKKDRFP. A compositionally biased stretch (basic residues) spans 1240 to 1253; the sequence is QLHKTKKKAPKVSK.

Promotes the exchange of Ras-bound GDP by GTP. In Saccharomyces cerevisiae (Baker's yeast), this protein is Guanine nucleotide exchange factor SDC25 (SDC25).